Reading from the N-terminus, the 329-residue chain is Acetyl-coenzyme A carboxylase carboxyl transferase subunit alpha (329 aa).

Residues 40–294 (QLETLAARRR…REAIERHLDE (255 aa)) enclose the CoA carboxyltransferase C-terminal domain.

This sequence belongs to the AccA family. In terms of assembly, acetyl-CoA carboxylase is a heterohexamer composed of biotin carboxyl carrier protein (AccB), biotin carboxylase (AccC) and two subunits each of ACCase subunit alpha (AccA) and ACCase subunit beta (AccD).

It is found in the cytoplasm. The catalysed reaction is N(6)-carboxybiotinyl-L-lysyl-[protein] + acetyl-CoA = N(6)-biotinyl-L-lysyl-[protein] + malonyl-CoA. Its pathway is lipid metabolism; malonyl-CoA biosynthesis; malonyl-CoA from acetyl-CoA: step 1/1. Its function is as follows. Component of the acetyl coenzyme A carboxylase (ACC) complex. First, biotin carboxylase catalyzes the carboxylation of biotin on its carrier protein (BCCP) and then the CO(2) group is transferred by the carboxyltransferase to acetyl-CoA to form malonyl-CoA. This chain is Acetyl-coenzyme A carboxylase carboxyl transferase subunit alpha, found in Prochlorococcus marinus (strain MIT 9313).